A 388-amino-acid chain; its full sequence is Gastricsin (388 aa).

The signal sequence occupies residues 1 to 16; sequence MKWMVVAFICLQLLEA. A propeptide spans 17 to 59 (activation peptide); sequence TVVKVPLKKFKSIRETMKEKGLLWEFLKTHKHDPARKYRVSDL. The region spanning 73-385 is the Peptidase A1 domain; that stretch reads YFGEISIGTP…DLGNNRVGFA (313 aa). The active site involves aspartate 91. Disulfide bonds link cysteine 104-cysteine 109 and cysteine 267-cysteine 271. Residue aspartate 276 is part of the active site. Residues cysteine 310 and cysteine 343 are joined by a disulfide bond.

This sequence belongs to the peptidase A1 family.

The protein resides in the secreted. It catalyses the reaction More restricted specificity than pepsin A, but shows preferential cleavage at Tyr-|-Xaa bonds. High activity on hemoglobin.. Its activity is regulated as follows. Inhibited by pepstatin. In terms of biological role, hydrolyzes a variety of proteins. This is Gastricsin (PGC) from Callithrix jacchus (White-tufted-ear marmoset).